The primary structure comprises 550 residues: Hydroxylamine reductase (550 aa).

[2Fe-2S] cluster-binding residues include C3, C6, C18, and C25. Residues H249, E273, C317, C405, C433, C458, E492, and K494 each coordinate hybrid [4Fe-2O-2S] cluster. C405 is subject to Cysteine persulfide.

The protein belongs to the HCP family. [2Fe-2S] cluster serves as cofactor. Requires hybrid [4Fe-2O-2S] cluster as cofactor.

It is found in the cytoplasm. The enzyme catalyses A + NH4(+) + H2O = hydroxylamine + AH2 + H(+). Catalyzes the reduction of hydroxylamine to form NH(3) and H(2)O. This Yersinia pseudotuberculosis serotype IB (strain PB1/+) protein is Hydroxylamine reductase.